Reading from the N-terminus, the 479-residue chain is Replication factor C large subunit (479 aa).

An ATP-binding site is contributed by 56–63 (GPPGVGKT). A compositionally biased stretch (basic and acidic residues) spans 435–461 (LGEKPLEPQEAKARRRGEKASRDEGRK). Residues 435–479 (LGEKPLEPQEAKARRRGEKASRDEGRKAGKRERKGVGLDFFLGEQ) form a disordered region.

This sequence belongs to the activator 1 small subunits family. RfcL subfamily. As to quaternary structure, heteromultimer composed of small subunits (RfcS) and large subunits (RfcL).

Part of the RFC clamp loader complex which loads the PCNA sliding clamp onto DNA. In Aeropyrum pernix (strain ATCC 700893 / DSM 11879 / JCM 9820 / NBRC 100138 / K1), this protein is Replication factor C large subunit.